The sequence spans 82 residues: Small ribosomal subunit protein uS17 (82 aa).

The protein belongs to the universal ribosomal protein uS17 family. As to quaternary structure, part of the 30S ribosomal subunit.

Functionally, one of the primary rRNA binding proteins, it binds specifically to the 5'-end of 16S ribosomal RNA. The sequence is that of Small ribosomal subunit protein uS17 from Shewanella sp. (strain W3-18-1).